The primary structure comprises 116 residues: Ribonuclease P protein component (116 aa).

It belongs to the RnpA family. As to quaternary structure, consists of a catalytic RNA component (M1 or rnpB) and a protein subunit.

The catalysed reaction is Endonucleolytic cleavage of RNA, removing 5'-extranucleotides from tRNA precursor.. RNaseP catalyzes the removal of the 5'-leader sequence from pre-tRNA to produce the mature 5'-terminus. It can also cleave other RNA substrates such as 4.5S RNA. The protein component plays an auxiliary but essential role in vivo by binding to the 5'-leader sequence and broadening the substrate specificity of the ribozyme. This is Ribonuclease P protein component from Thermoanaerobacter pseudethanolicus (strain ATCC 33223 / 39E) (Clostridium thermohydrosulfuricum).